Consider the following 102-residue polypeptide: Large ribosomal subunit protein bL21 (102 aa).

The protein belongs to the bacterial ribosomal protein bL21 family. Part of the 50S ribosomal subunit. Contacts protein L20.

Functionally, this protein binds to 23S rRNA in the presence of protein L20. The protein is Large ribosomal subunit protein bL21 of Campylobacter jejuni subsp. jejuni serotype O:6 (strain 81116 / NCTC 11828).